The primary structure comprises 118 residues: Large ribosomal subunit protein uL24 (118 aa).

This sequence belongs to the universal ribosomal protein uL24 family. Part of the 50S ribosomal subunit.

Functionally, one of two assembly initiator proteins, it binds directly to the 5'-end of the 23S rRNA, where it nucleates assembly of the 50S subunit. One of the proteins that surrounds the polypeptide exit tunnel on the outside of the subunit. This chain is Large ribosomal subunit protein uL24, found in Prochlorococcus marinus (strain MIT 9215).